Reading from the N-terminus, the 261-residue chain is Ribosomal RNA small subunit methyltransferase J (261 aa).

S-adenosyl-L-methionine is bound by residues 101–102 (RD), 117–118 (ER), 153–154 (SS), and Asp176.

This sequence belongs to the methyltransferase superfamily. RsmJ family.

It is found in the cytoplasm. It catalyses the reaction guanosine(1516) in 16S rRNA + S-adenosyl-L-methionine = N(2)-methylguanosine(1516) in 16S rRNA + S-adenosyl-L-homocysteine + H(+). Its function is as follows. Specifically methylates the guanosine in position 1516 of 16S rRNA. The chain is Ribosomal RNA small subunit methyltransferase J from Vibrio cholerae serotype O1 (strain ATCC 39315 / El Tor Inaba N16961).